The sequence spans 325 residues: Prenytransferase adrG (325 aa).

7 helical membrane passes run 47-67, 71-91, 117-137, 163-183, 189-209, 236-256, and 258-278; these read LVGV…AVLL, MLLS…DDLI, ALLL…FLPW, PQIT…SLGL, MTPT…IDVI, LLSY…GVLT, and LGLP…WVLL.

The protein belongs to the UbiA prenyltransferase family. The cofactor is Mg(2+).

The protein localises to the membrane. The catalysed reaction is 3,5-dimethylorsellinate + (2E,6E)-farnesyl diphosphate = (3R)-3-farnesyl-6-hydroxy-2,3,5-trimethyl-4-oxocyclohexa-1,5-diene-1-carboxylate + diphosphate + H(+). It functions in the pathway secondary metabolite biosynthesis; terpenoid biosynthesis. Its function is as follows. Prenytransferase; part of the gene cluster that mediates the biosynthesis of andrastins, meroterpenoid compounds that exhibit inhibitory activity against ras farnesyltransferase, suggesting that they could be promising leads for antitumor agents. The first step of the pathway is the synthesis of 3,5-dimethylorsellinic acid (DMOA) by the polyketide synthase adrD via condensation of one acetyl-CoA starter unit with 3 malonyl-CoA units and 2 methylations. DMAO is then converted to farnesyl-DMAO by the prenyltransferase adrG. The methyltransferase adrK catalyzes the methylation of the carboxyl group of farnesyl-DMAO to farnesyl-DMAO methyl ester which is further converted to epoxyfarnesyl-DMAO methyl ester by the FAD-dependent monooxygenase adrH. The terpene cyclase adrI then catalyzes the carbon skeletal rearrangement to generate the andrastin E, the first compound in the pathway having the andrastin scaffold, with the tetracyclic ring system. The post-cyclization tailoring enzymes adrF, adrE, adrJ, and adrA, are involved in the conversion of andrastin E into andrastin A. The short chain dehydrogenase adrF is responsible for the oxidation of the C-3 a hydroxyl group of andrastin E to yield the corresponding ketone, andrastin D. The ketoreductase adrE stereoselectively reduces the carbonyl moiety to reverse the stereochemistry of the C-3 position to yield andrastin F. The acetyltransferase adrJ is the acetyltransferase that attaches the acetyl group to the C-3 hydroxyl group of andrastin F to yield andrastin C. Finally, the cytochrome P450 monooxygenase adrA catalyzes two sequential oxidation reactions of the C-23 methyl group, to generate the corresponding alcohol andrastin B, and aldehyde andrastin A. This chain is Prenytransferase adrG, found in Penicillium rubens (strain ATCC 28089 / DSM 1075 / NRRL 1951 / Wisconsin 54-1255) (Penicillium chrysogenum).